A 493-amino-acid polypeptide reads, in one-letter code: 3-octaprenyl-4-hydroxybenzoate carboxy-lyase (493 aa).

Residue asparagine 172 participates in Mn(2+) binding. Prenylated FMN is bound by residues isoleucine 175–arginine 177, arginine 189–leucine 191, and arginine 194–glycine 195. Glutamate 238 contacts Mn(2+). Aspartate 287 acts as the Proton donor in catalysis.

This sequence belongs to the UbiD family. Homohexamer. Requires prenylated FMN as cofactor. It depends on Mn(2+) as a cofactor.

The protein localises to the cell membrane. The catalysed reaction is a 4-hydroxy-3-(all-trans-polyprenyl)benzoate + H(+) = a 2-(all-trans-polyprenyl)phenol + CO2. Its pathway is cofactor biosynthesis; ubiquinone biosynthesis. Catalyzes the decarboxylation of 3-octaprenyl-4-hydroxy benzoate to 2-octaprenylphenol, an intermediate step in ubiquinone biosynthesis. The chain is 3-octaprenyl-4-hydroxybenzoate carboxy-lyase from Shewanella putrefaciens (strain CN-32 / ATCC BAA-453).